A 282-amino-acid polypeptide reads, in one-letter code: Acetyl-coenzyme A carboxylase carboxyl transferase subunit beta (282 aa).

A CoA carboxyltransferase N-terminal domain is found at 23–282; that stretch reads IWTKCGQCDA…MLSKLHHQQA (260 aa). Residues Cys-27, Cys-30, Cys-46, and Cys-49 each coordinate Zn(2+). A C4-type zinc finger spans residues 27-49; it reads CGQCDAVLYKTELEKQLGVCPKC.

This sequence belongs to the AccD/PCCB family. Acetyl-CoA carboxylase is a heterohexamer composed of biotin carboxyl carrier protein (AccB), biotin carboxylase (AccC) and two subunits each of ACCase subunit alpha (AccA) and ACCase subunit beta (AccD). Zn(2+) serves as cofactor.

It is found in the cytoplasm. The catalysed reaction is N(6)-carboxybiotinyl-L-lysyl-[protein] + acetyl-CoA = N(6)-biotinyl-L-lysyl-[protein] + malonyl-CoA. The protein operates within lipid metabolism; malonyl-CoA biosynthesis; malonyl-CoA from acetyl-CoA: step 1/1. In terms of biological role, component of the acetyl coenzyme A carboxylase (ACC) complex. Biotin carboxylase (BC) catalyzes the carboxylation of biotin on its carrier protein (BCCP) and then the CO(2) group is transferred by the transcarboxylase to acetyl-CoA to form malonyl-CoA. This chain is Acetyl-coenzyme A carboxylase carboxyl transferase subunit beta, found in Pseudoalteromonas atlantica (strain T6c / ATCC BAA-1087).